The following is a 199-amino-acid chain: UPF0462 protein C4orf33 homolog (199 aa).

It belongs to the UPF0462 family.

This chain is UPF0462 protein C4orf33 homolog, found in Rattus norvegicus (Rat).